The chain runs to 634 residues: Glutamate--tRNA ligase (634 aa).

A 'HIGH' region motif is present at residues 108–118 (PNPSGPLHIGH).

Belongs to the class-I aminoacyl-tRNA synthetase family. Glutamate--tRNA ligase type 2 subfamily.

The protein localises to the cytoplasm. It carries out the reaction tRNA(Glu) + L-glutamate + ATP = L-glutamyl-tRNA(Glu) + AMP + diphosphate. Functionally, catalyzes the attachment of glutamate to tRNA(Glu) in a two-step reaction: glutamate is first activated by ATP to form Glu-AMP and then transferred to the acceptor end of tRNA(Glu). This is Glutamate--tRNA ligase from Methanoregula boonei (strain DSM 21154 / JCM 14090 / 6A8).